A 109-amino-acid chain; its full sequence is Large ribosomal subunit protein uL22 (109 aa).

This sequence belongs to the universal ribosomal protein uL22 family. Part of the 50S ribosomal subunit.

Its function is as follows. This protein binds specifically to 23S rRNA; its binding is stimulated by other ribosomal proteins, e.g. L4, L17, and L20. It is important during the early stages of 50S assembly. It makes multiple contacts with different domains of the 23S rRNA in the assembled 50S subunit and ribosome. In terms of biological role, the globular domain of the protein is located near the polypeptide exit tunnel on the outside of the subunit, while an extended beta-hairpin is found that lines the wall of the exit tunnel in the center of the 70S ribosome. The polypeptide is Large ribosomal subunit protein uL22 (Psychrobacter cryohalolentis (strain ATCC BAA-1226 / DSM 17306 / VKM B-2378 / K5)).